Here is an 82-residue protein sequence, read N- to C-terminus: Small ribosomal subunit protein eS21z (82 aa).

An N-acetylmethionine modification is found at methionine 1.

The protein belongs to the eukaryotic ribosomal protein eS21 family.

The polypeptide is Small ribosomal subunit protein eS21z (RPS21B) (Arabidopsis thaliana (Mouse-ear cress)).